Here is a 368-residue protein sequence, read N- to C-terminus: Proline-rich protein 5-like (368 aa).

Phosphoserine is present on S28. The disordered stretch occupies residues 312–368 (LGEESGGEDKCLLLQPSFPPPHRQCSSEPNITDGPDEPEQGATGSQEDSELNCASLS). The segment covering 353–368 (ATGSQEDSELNCASLS) has biased composition (polar residues).

The protein belongs to the PROTOR family. As to quaternary structure, interacts with the mammalian target of rapamycin complex 2 (mTORC2) which contains MTOR, MLST8, PRR5, RICTOR, MAPKAP1 and DEPTOR. Interacts with RFFL. Interacts (via C-terminus) with ZFP36 (via C-terminus); this interaction may accelerate ZFP36-mediated mRNA decay during stress. Interacts with RICTOR. In terms of processing, ubiquitinated. Ubiquitination by RFFL promotes proteasomal degradation of PRR5L thereby modifying the substrate-specific activity of the mTORC2 complex. Ubiquitination by RFFL is stimulated by LPA/lysophosphatidic acid.

Functionally, associates with the mTORC2 complex that regulates cellular processes including survival and organization of the cytoskeleton. Regulates the activity of the mTORC2 complex in a substrate-specific manner preventing for instance the specific phosphorylation of PKCs and thereby controlling cell migration. Plays a role in the stimulation of ZFP36-mediated mRNA decay of several ZFP36-associated mRNAs, such as TNF-alpha and GM-CSF, in response to stress. Required for ZFP36 localization to cytoplasmic stress granule (SG) and P-body (PB) in response to stress. The chain is Proline-rich protein 5-like (PRR5L) from Bos taurus (Bovine).